Reading from the N-terminus, the 271-residue chain is MNTPEDSSLGREVAYPSGYDPSLLFPIPRAAGRAAIGLRGALPFVGRDRWHAYELSWLDAHGKPCVATATLHVPCESPALIESKSLKLYLNSLNATRFNSAEAVRARIATDLSTRAGADVSVEFGLPPIDAVGEGESIDALDIAIDDYGPPKADYLATHAGTVVEEVLASALLKSNCPVTGQPDWASVTLRYRGAPIDREGLLRYLVSFRDHADFHEQCVERIFQDLLVRCAPQWLVVEARYTRRGGLDINPVRTSPQMPTPLSIFRDLRQ.

81–83 contributes to the substrate binding site; that stretch reads IES. 83–84 is a binding site for NADPH; sequence SK. Residue cysteine 177 is the Thioimide intermediate of the active site. The active-site Proton donor is aspartate 184. A substrate-binding site is contributed by 216–217; sequence HE. 245–246 is a binding site for NADPH; it reads RG.

This sequence belongs to the GTP cyclohydrolase I family. QueF type 2 subfamily. Homodimer.

Its subcellular location is the cytoplasm. It catalyses the reaction 7-aminomethyl-7-carbaguanine + 2 NADP(+) = 7-cyano-7-deazaguanine + 2 NADPH + 3 H(+). The protein operates within tRNA modification; tRNA-queuosine biosynthesis. Functionally, catalyzes the NADPH-dependent reduction of 7-cyano-7-deazaguanine (preQ0) to 7-aminomethyl-7-deazaguanine (preQ1). In Xanthomonas campestris pv. campestris (strain 8004), this protein is NADPH-dependent 7-cyano-7-deazaguanine reductase.